Reading from the N-terminus, the 568-residue chain is Adenine deaminase (568 aa).

It belongs to the metallo-dependent hydrolases superfamily. Adenine deaminase family. Mn(2+) serves as cofactor.

It carries out the reaction adenine + H2O + H(+) = hypoxanthine + NH4(+). This Clostridium perfringens (strain ATCC 13124 / DSM 756 / JCM 1290 / NCIMB 6125 / NCTC 8237 / Type A) protein is Adenine deaminase.